A 136-amino-acid polypeptide reads, in one-letter code: Large ribosomal subunit protein uL16c (136 aa).

Belongs to the universal ribosomal protein uL16 family. In terms of assembly, part of the 50S ribosomal subunit.

Its subcellular location is the plastid. It is found in the chloroplast. The chain is Large ribosomal subunit protein uL16c from Oryza nivara (Indian wild rice).